Here is a 443-residue protein sequence, read N- to C-terminus: UDP-N-acetylmuramate--L-alanine ligase (443 aa).

110–116 (GAHGKTS) lines the ATP pocket.

This sequence belongs to the MurCDEF family.

It is found in the cytoplasm. It catalyses the reaction UDP-N-acetyl-alpha-D-muramate + L-alanine + ATP = UDP-N-acetyl-alpha-D-muramoyl-L-alanine + ADP + phosphate + H(+). Its pathway is cell wall biogenesis; peptidoglycan biosynthesis. Cell wall formation. The chain is UDP-N-acetylmuramate--L-alanine ligase from Streptococcus equi subsp. equi (strain 4047).